Reading from the N-terminus, the 322-residue chain is N-acetyl-gamma-glutamyl-phosphate reductase (322 aa).

Residue cysteine 132 is part of the active site.

This sequence belongs to the NAGSA dehydrogenase family. Type 1 subfamily.

It localises to the cytoplasm. The enzyme catalyses N-acetyl-L-glutamate 5-semialdehyde + phosphate + NADP(+) = N-acetyl-L-glutamyl 5-phosphate + NADPH + H(+). It participates in amino-acid biosynthesis; L-arginine biosynthesis; N(2)-acetyl-L-ornithine from L-glutamate: step 3/4. Catalyzes the NADPH-dependent reduction of N-acetyl-5-glutamyl phosphate to yield N-acetyl-L-glutamate 5-semialdehyde. The sequence is that of N-acetyl-gamma-glutamyl-phosphate reductase from Parabacteroides distasonis (strain ATCC 8503 / DSM 20701 / CIP 104284 / JCM 5825 / NCTC 11152).